A 408-amino-acid polypeptide reads, in one-letter code: Peptidase T (408 aa).

Residue His-78 coordinates Zn(2+). Asp-80 is a catalytic residue. Asp-140 provides a ligand contact to Zn(2+). Glu-173 acts as the Proton acceptor in catalysis. Positions 174, 196, and 379 each coordinate Zn(2+).

Belongs to the peptidase M20B family. Requires Zn(2+) as cofactor.

The protein localises to the cytoplasm. The enzyme catalyses Release of the N-terminal residue from a tripeptide.. Cleaves the N-terminal amino acid of tripeptides. The protein is Peptidase T of Shigella flexneri serotype 5b (strain 8401).